The sequence spans 481 residues: ATP synthase subunit beta, chloroplastic (481 aa).

163–170 (GGAGVGKT) serves as a coordination point for ATP.

Belongs to the ATPase alpha/beta chains family. As to quaternary structure, F-type ATPases have 2 components, CF(1) - the catalytic core - and CF(0) - the membrane proton channel. CF(1) has five subunits: alpha(3), beta(3), gamma(1), delta(1), epsilon(1). CF(0) has four main subunits: a(1), b(1), b'(1) and c(9-12).

It is found in the plastid. Its subcellular location is the chloroplast thylakoid membrane. The enzyme catalyses ATP + H2O + 4 H(+)(in) = ADP + phosphate + 5 H(+)(out). Its function is as follows. Produces ATP from ADP in the presence of a proton gradient across the membrane. The catalytic sites are hosted primarily by the beta subunits. This Tupiella akineta (Green alga) protein is ATP synthase subunit beta, chloroplastic.